The sequence spans 92 residues: Large ribosomal subunit protein bL27 (92 aa).

A propeptide spanning residues 1–10 (MLLQLQIQLF) is cleaved from the precursor.

It belongs to the bacterial ribosomal protein bL27 family. The N-terminus is cleaved by ribosomal processing cysteine protease Prp.

The chain is Large ribosomal subunit protein bL27 from Aster yellows witches'-broom phytoplasma (strain AYWB).